Consider the following 92-residue polypeptide: Small ribosomal subunit protein uS19 (92 aa).

The protein belongs to the universal ribosomal protein uS19 family.

Protein S19 forms a complex with S13 that binds strongly to the 16S ribosomal RNA. The sequence is that of Small ribosomal subunit protein uS19 from Cyanothece sp. (strain PCC 7425 / ATCC 29141).